A 183-amino-acid chain; its full sequence is Oleosin-B2 (183 aa).

The interval 1–23 is polar; the sequence is QASIFSRFFRMFSFIFPFVNVIK. 3 helical membrane passes run 24-44, 46-66, and 72-92; these read LIIASVTSLVCLAFSCVALGG, AVALIVSTPLFIMFSPILVPA, and LLASGLMAGTTLGLTGIGLIM. The segment at 24–95 is hydrophobic; it reads LIIASVTSLV…TGIGLIMGLV (72 aa).

Belongs to the oleosin family. The full-length protein is found in the tapetal lipid bodies of immature anthers, the proteolytically cleaved C-terminal product is found on the coats of pollen grains. Not present in seeds.

Its subcellular location is the lipid droplet. The protein localises to the membrane. In terms of biological role, many of the major pollen coat proteins are derived from endoproteolytic cleavage of oleosin-like proteins. The sequence is that of Oleosin-B2 (OlnB2) from Brassica napus (Rape).